The sequence spans 124 residues: Fluoride-specific ion channel FluC (124 aa).

4 helical membrane passes run 4 to 24 (VLFV…ISLL), 35 to 55 (FGTL…FALG), 62 to 82 (PEIK…FSTF), and 95 to 115 (LVKA…VVYL). Na(+) contacts are provided by Gly-74 and Thr-77.

The protein belongs to the fluoride channel Fluc/FEX (TC 1.A.43) family.

The protein localises to the cell inner membrane. It carries out the reaction fluoride(in) = fluoride(out). With respect to regulation, na(+) is not transported, but it plays an essential structural role and its presence is essential for fluoride channel function. Its function is as follows. Fluoride-specific ion channel. Important for reducing fluoride concentration in the cell, thus reducing its toxicity. In Shewanella halifaxensis (strain HAW-EB4), this protein is Fluoride-specific ion channel FluC.